Consider the following 368-residue polypeptide: MSVGIVEEQSVTFETDLRLESGRILGPITLAYETYGRLNADRSNAILVAHAWTGNAHLAGKYSEDDPKPGWWDAIVGPGRLLDTDRWFVICSNVIGSCYGSTGPASVNPKTGKRYNLSFPVITVRDMVRAQALLLDHLGIERLLTVLGGSMGGMQALEWATQFPDRVRSAIALATTSRPSPQAISLNAVARWAIFNDPSWKKGEYRKNPKDGLALARGIGHITFLSDESMWQKFGRRYSARDGLFDFFGQFEVERYLTYNGYNFVDRFDTNSFLYLAKALDLYDVAWGYESLEDAFSRVTAPIQFFAFTSDWLYPPYQTEEMATTLRALGKEAEYHLIPSAYGHDAFLLEHETFAPMVRDFLARVERG.

One can recognise an AB hydrolase-1 domain in the interval 44 to 350; sequence NAILVAHAWT…AYGHDAFLLE (307 aa). S150 serves as the catalytic Nucleophile. Substrate is bound at residue R217. Catalysis depends on residues D311 and H344. D345 provides a ligand contact to substrate.

This sequence belongs to the AB hydrolase superfamily. MetX family. As to quaternary structure, homodimer.

The protein resides in the cytoplasm. It carries out the reaction L-homoserine + acetyl-CoA = O-acetyl-L-homoserine + CoA. It functions in the pathway amino-acid biosynthesis; L-methionine biosynthesis via de novo pathway; O-acetyl-L-homoserine from L-homoserine: step 1/1. In terms of biological role, transfers an acetyl group from acetyl-CoA to L-homoserine, forming acetyl-L-homoserine. The chain is Homoserine O-acetyltransferase from Geobacter sulfurreducens (strain ATCC 51573 / DSM 12127 / PCA).